The primary structure comprises 504 residues: Maturase K (504 aa).

The protein belongs to the intron maturase 2 family. MatK subfamily.

Its subcellular location is the plastid. It is found in the chloroplast. Its function is as follows. Usually encoded in the trnK tRNA gene intron. Probably assists in splicing its own and other chloroplast group II introns. This Lupinus argenteus (Silvery lupine) protein is Maturase K.